A 336-amino-acid polypeptide reads, in one-letter code: Inositol 2-dehydrogenase (336 aa).

It belongs to the Gfo/Idh/MocA family. Homotetramer.

It catalyses the reaction myo-inositol + NAD(+) = scyllo-inosose + NADH + H(+). In terms of biological role, involved in the oxidation of myo-inositol (MI) to 2-keto-myo-inositol (2KMI or 2-inosose). The protein is Inositol 2-dehydrogenase of Salmonella agona (strain SL483).